A 245-amino-acid polypeptide reads, in one-letter code: uncharacterized protein (245 aa).

Helical transmembrane passes span 10–30, 94–114, 134–154, and 196–216; these read FYTL…SPWY, TLAF…YVHI, VLIG…FLII, and RGWI…IYCW.

The protein resides in the membrane. This is an uncharacterized protein from Dictyostelium discoideum (Social amoeba).